The following is a 1107-amino-acid chain: Copine family protein 1 (1107 aa).

Residues methionine 1–histidine 22 lie on the Extracellular side of the membrane. A helical membrane pass occupies residues phenylalanine 23–phenylalanine 45. Residues phenylalanine 46 to leucine 1107 are Cytoplasmic-facing. The stretch at valine 67 to asparagine 124 forms a coiled coil. The segment covering glutamine 478–glutamine 488 has biased composition (low complexity). Disordered regions lie at residues glutamine 478–serine 501 and histidine 673–valine 698. Positions isoleucine 492–serine 501 are enriched in basic and acidic residues. A compositionally biased stretch (polar residues) spans lysine 687–valine 698. One can recognise a VWFA domain in the interval asparagine 863 to aspartate 1023.

The protein belongs to the copine family. In terms of assembly, may interact (via VWFA domain) with unc-89 (via Ig-like C2-type 1-3) and unc-96 (via C-terminus); cpna-1 binding sites for unc-89 and unc-96 are different. May interact with pat-6. May interact with lim-9 (via LIM domains) and with scpl-1 (via FCP1 homology domain). Expressed in body wall muscles (at protein level).

The protein localises to the basal cell membrane. The protein resides in the cytoplasm. Its subcellular location is the myofibril. It localises to the sarcomere. It is found in the m line. Its function is as follows. Involved in the assembly of dense bodies and M lines during body wall muscle development. Acts by recruiting downstream of integrin-associated protein pat-6/actopaxin several dense bodies and M line components including unc-89, lim-9, scpl-1 and unc-96 to integrin-mediated attachment sites. The chain is Copine family protein 1 from Caenorhabditis elegans.